A 336-amino-acid polypeptide reads, in one-letter code: UDP-N-acetylenolpyruvoylglucosamine reductase (336 aa).

The FAD-binding PCMH-type domain maps to 1-178; that stretch reads MAHSLQTLHT…TTVHLALPKE (178 aa). Arg-154 is an active-site residue. Residue Ser-222 is the Proton donor of the active site. Glu-318 is a catalytic residue.

The protein belongs to the MurB family. The cofactor is FAD.

The protein resides in the cytoplasm. It carries out the reaction UDP-N-acetyl-alpha-D-muramate + NADP(+) = UDP-N-acetyl-3-O-(1-carboxyvinyl)-alpha-D-glucosamine + NADPH + H(+). The protein operates within cell wall biogenesis; peptidoglycan biosynthesis. In terms of biological role, cell wall formation. In Pseudoalteromonas translucida (strain TAC 125), this protein is UDP-N-acetylenolpyruvoylglucosamine reductase.